The primary structure comprises 309 residues: Acetyl-coenzyme A carboxylase carboxyl transferase subunit beta (309 aa).

One can recognise a CoA carboxyltransferase N-terminal domain in the interval 27-296; sequence LWKKCPKCGA…PGTEAPIEFE (270 aa). Residues cysteine 31, cysteine 34, cysteine 50, and cysteine 53 each coordinate Zn(2+). Residues 31-53 form a C4-type zinc finger; it reads CPKCGAFLYKPELEKNLDVCPKC. The tract at residues 288-309 is disordered; it reads GTEAPIEFEVTEKPDVDEPEGQ.

It belongs to the AccD/PCCB family. Acetyl-CoA carboxylase is a heterohexamer composed of biotin carboxyl carrier protein (AccB), biotin carboxylase (AccC) and two subunits each of ACCase subunit alpha (AccA) and ACCase subunit beta (AccD). It depends on Zn(2+) as a cofactor.

It localises to the cytoplasm. It carries out the reaction N(6)-carboxybiotinyl-L-lysyl-[protein] + acetyl-CoA = N(6)-biotinyl-L-lysyl-[protein] + malonyl-CoA. It participates in lipid metabolism; malonyl-CoA biosynthesis; malonyl-CoA from acetyl-CoA: step 1/1. Component of the acetyl coenzyme A carboxylase (ACC) complex. Biotin carboxylase (BC) catalyzes the carboxylation of biotin on its carrier protein (BCCP) and then the CO(2) group is transferred by the transcarboxylase to acetyl-CoA to form malonyl-CoA. The polypeptide is Acetyl-coenzyme A carboxylase carboxyl transferase subunit beta (Marinobacter nauticus (strain ATCC 700491 / DSM 11845 / VT8) (Marinobacter aquaeolei)).